The sequence spans 92 residues: Isoleucine--tRNA ligase (92 aa).

The Zn(2+) site is built by Cys-55, Cys-58, Cys-75, and Cys-78.

The protein belongs to the class-I aminoacyl-tRNA synthetase family. IleS type 1 subfamily. Monomer. Requires Zn(2+) as cofactor.

It localises to the cytoplasm. It carries out the reaction tRNA(Ile) + L-isoleucine + ATP = L-isoleucyl-tRNA(Ile) + AMP + diphosphate. In terms of biological role, catalyzes the attachment of isoleucine to tRNA(Ile). As IleRS can inadvertently accommodate and process structurally similar amino acids such as valine, to avoid such errors it has two additional distinct tRNA(Ile)-dependent editing activities. One activity is designated as 'pretransfer' editing and involves the hydrolysis of activated Val-AMP. The other activity is designated 'posttransfer' editing and involves deacylation of mischarged Val-tRNA(Ile). The chain is Isoleucine--tRNA ligase (ileS) from Klebsiella aerogenes (Enterobacter aerogenes).